The sequence spans 266 residues: 3-methyl-2-oxobutanoate hydroxymethyltransferase 2 (266 aa).

Mg(2+) is bound by residues D45 and D84. 3-methyl-2-oxobutanoate contacts are provided by residues 45 to 46 (DS), D84, and K112. E114 contacts Mg(2+). E181 (proton acceptor) is an active-site residue.

Belongs to the PanB family. In terms of assembly, homodecamer; pentamer of dimers. Mg(2+) is required as a cofactor.

It is found in the cytoplasm. It carries out the reaction 3-methyl-2-oxobutanoate + (6R)-5,10-methylene-5,6,7,8-tetrahydrofolate + H2O = 2-dehydropantoate + (6S)-5,6,7,8-tetrahydrofolate. Its pathway is cofactor biosynthesis; (R)-pantothenate biosynthesis; (R)-pantoate from 3-methyl-2-oxobutanoate: step 1/2. Catalyzes the reversible reaction in which hydroxymethyl group from 5,10-methylenetetrahydrofolate is transferred onto alpha-ketoisovalerate to form ketopantoate. The polypeptide is 3-methyl-2-oxobutanoate hydroxymethyltransferase 2 (Pseudomonas entomophila (strain L48)).